A 386-amino-acid polypeptide reads, in one-letter code: MLRMKKICTAFLTIALCTHVLAHDDTEMKDPNRVSQEQRERKVEYGTYTVPPRNQDNGMFRLKRDVDPPCTNCVITVMSANLEYSNGTTADAENGMWLHHILFYNKANRDDICGEKKPGQRFFGSGNDRTPLDLTDGGKNKLGYHIGHNDQFFISVELMNMHFSSQDVVLTAHWKFVEEPYSEYELGTPYWFDVASCGRSDVPATNNAIFNFISPPVRLDFHGQLAYLSNHVHDGAYLHEVKKNGKIICSVNPQYSSDDGADGIVHLSHVPPCSNAGPVAPGDEVSLTASYDTTKYAPMINEDGTLEPVMGVTLAYIVKGTAPVASDSGGRFYFVVPIAAIAFIALTIGAGYVFYSARQKKEWPKWLSRRQKYQSVGTEDEAFLAR.

The first 22 residues, 1-22 (MLRMKKICTAFLTIALCTHVLA), serve as a signal peptide directing secretion. The N-linked (GlcNAc...) asparagine glycan is linked to asparagine 86. Residues 334 to 354 (FVVPIAAIAFIALTIGAGYVF) form a helical membrane-spanning segment.

The protein belongs to the clz3 oxygenase family.

It localises to the membrane. It participates in secondary metabolite biosynthesis. Its function is as follows. Probable copper-dependent oxygenase; part of the gene cluster that mediates the biosynthesis of squalestatin S1 (SQS1, also known as zaragozic acid A), a heavily oxidized fungal polyketide that offers potent cholesterol lowering activity by targeting squalene synthase (SS). SQS1 is composed of a 2,8-dioxobicyclic[3.2.1]octane-3,4,5-tricarboxyclic acid core that is connected to two lipophilic polyketide arms. These initial steps feature the priming of an unusual benzoic acid starter unit onto the highly reducing polyketide synthase pks2, followed by oxaloacetate extension and product release to generate a tricarboxylic acid containing product. The phenylalanine ammonia lyase (PAL) M7 and the acyl-CoA ligase M9 are involved in transforming phenylalanine into benzoyl-CoA. The citrate synthase-like protein R3 is involved in connecting the C-alpha-carbons of the hexaketide chain and oxaloacetate to afford the tricarboxylic acid unit. The potential hydrolytic enzymes, M8 and M10, are in close proximity to pks2 and may participate in product release. On the other side, the tetraketide arm is synthesized by a the squalestatin tetraketide synthase pks1 and enzymatically esterified to the core in the last biosynthetic step, by the acetyltransferase M4. The biosynthesis of the tetraketide must involve 3 rounds of chain extension. After the first and second rounds methyl-transfer occurs, and in all rounds of extension the ketoreductase and dehydratase are active. The enoyl reductase and C-MeT of pks1 are not active in the final round of extension. The acetyltransferase M4 appears to have a broad substrate selectivity for its acyl CoA substrate, allowing the in vitro synthesis of novel squalestatins. The biosynthesis of SQS1 requires several oxidative steps likely performed by oxidoreductases M1, R1 and R2. Finally, in support of the identification of the cluster as being responsible for SQS1 production, the cluster contains a gene encoding a putative squalene synthase (SS) R6, suggesting a likely mechanism for self-resistance. This Phoma sp. (strain ATCC 20986 / MF5453) protein is Probable copper-dependent oxygenase M1.